Reading from the N-terminus, the 213-residue chain is MNADTWTRLQAFRHALELTSCEASLTAGYDHLKDFPAGCSELASQTLTDYLTEDGSNLYSCIVGMQWDNGPGRYGHVIAAPARDYIDLTLDQFPGYHNRIVAEPVESGGQLAADLNREPAISTADGIVASASDKVNYITEQKNRQPMVIITECYKLIRMTARFIPMCQSSQLFQHQIFPRLFIISDVGSCSLSRNTLDRLATDWKVTLSVLSL.

This is an uncharacterized protein from Escherichia coli (strain K12).